The chain runs to 971 residues: Protein ALWAYS EARLY 1 (971 aa).

A compositionally biased stretch (basic residues) spans 1–11; the sequence is MAPTRKSKSVN. 5 disordered regions span residues 1-40, 117-137, 197-260, 326-371, and 421-507; these read MAPTRKSKSVNKRFTNEASPDINFGSASKTKQRKKKLADK, SESEGEDHDASEVTRKHLKRK, IEDF…MFEN, GLLE…GLED, and PKES…KISL. The 59-residue stretch at 40 to 98 folds into the SANT domain; sequence KLGPQWTKRELVRFYDAYRKYVGDWKKVAAAVRNNRSVEMVETLFCMNRAYLSLPEGTA. Basic and acidic residues-rich tracts occupy residues 209 to 219, 332 to 350, and 424 to 440; these read KQLDADDDASR, SSPHWEEERKTNNVDKKSN, and STQDKSLYTKESAEVDS. The segment covering 450 to 470 has biased composition (polar residues); that stretch reads SSQGPAKQLKTAKTTVESSSA.

As to expression, expressed ubiquitously in vegetative and reproductive tissues.

Its subcellular location is the nucleus. The sequence is that of Protein ALWAYS EARLY 1 (ALY1) from Arabidopsis thaliana (Mouse-ear cress).